The chain runs to 111 residues: UPF0060 membrane protein Cbei_2176 (111 aa).

The next 4 helical transmembrane spans lie at 7–27, 33–53, 60–80, and 85–105; these read ILYF…IWIW, SYLY…IPTL, FGKV…LWGW, and IVPD…VIVI.

The protein belongs to the UPF0060 family.

Its subcellular location is the cell membrane. The sequence is that of UPF0060 membrane protein Cbei_2176 from Clostridium beijerinckii (strain ATCC 51743 / NCIMB 8052) (Clostridium acetobutylicum).